Here is a 272-residue protein sequence, read N- to C-terminus: Putative hydro-lyase AZC_4080 (272 aa).

The protein belongs to the D-glutamate cyclase family.

This Azorhizobium caulinodans (strain ATCC 43989 / DSM 5975 / JCM 20966 / LMG 6465 / NBRC 14845 / NCIMB 13405 / ORS 571) protein is Putative hydro-lyase AZC_4080.